The sequence spans 449 residues: Putative F-box/LRR-repeat protein 23 (449 aa).

LRR repeat units follow at residues 14-37 (KLWRYDDEPLAIAETMPELRHLKL) and 39-64 (GNGLTNLRLEAILDNCVHLVHLDLRR). An F-box domain is found at 178 to 225 (LRNWAELPSKLTSSILLRLGAIEILQNAQKVCKPWHRVCKDPSMWRKI). LRR repeat units lie at residues 261 to 286 (WYYGTNDLIMYIADRSSNLKSLGLVR), 287 to 311 (CFPITDEGVAKAVSKVPLLEYLEVS), 312 to 337 (YCLFSGESLRDIGRSCPNLKTLKLNR), 344 to 367 (SNSGFDDNAKAIAESMPELRHLQL), 369 to 394 (GNGLTNKGLNAILDGCPHLEHLDLRQ), and 401 to 427 (VGDLKKRCFERIKDLRCPNDSDDDSDD).

The sequence is that of Putative F-box/LRR-repeat protein 23 (FBL23) from Arabidopsis thaliana (Mouse-ear cress).